The following is a 73-amino-acid chain: Small ribosomal subunit protein eS27 (73 aa).

Zn(2+) contacts are provided by Cys-28, Cys-31, Cys-47, and Cys-50. The C4-type zinc-finger motif lies at 28–50; the sequence is CVDCGNEQIIFGNASTEVKCHIC.

The protein belongs to the eukaryotic ribosomal protein eS27 family. In terms of assembly, part of the 30S ribosomal subunit. Zn(2+) serves as cofactor.

The sequence is that of Small ribosomal subunit protein eS27 from Methanopyrus kandleri (strain AV19 / DSM 6324 / JCM 9639 / NBRC 100938).